Consider the following 354-residue polypeptide: Neutral protease 2 homolog BCIN_12g06300 (354 aa).

The first 19 residues, 1–19 (MRSFSKILAVASLAAIANS), serve as a signal peptide directing secretion. A propeptide spanning residues 20 to 179 (AVLKRDNNVL…PSSIDRRTVL (160 aa)) is cleaved from the precursor. Cystine bridges form between cysteine 183/cysteine 255 and cysteine 262/cysteine 280. Zn(2+) is bound at residue histidine 305. Residue glutamate 306 is part of the active site. Positions 309 and 320 each coordinate Zn(2+).

This sequence belongs to the peptidase M35 family. The cofactor is Zn(2+).

The protein resides in the secreted. It catalyses the reaction Preferential cleavage of bonds with hydrophobic residues in P1'. Also 3-Asn-|-Gln-4 and 8-Gly-|-Ser-9 bonds in insulin B chain.. In terms of biological role, secreted metalloproteinase that allows assimilation of proteinaceous substrates. Shows high activities on basic nuclear substrates such as histone and protamine. In Botryotinia fuckeliana (strain B05.10) (Noble rot fungus), this protein is Neutral protease 2 homolog BCIN_12g06300.